Reading from the N-terminus, the 274-residue chain is MSQIKPSRLSSSAEIRGARQLDVLQRHKLAEPQQDWLAEEVPVALVYNGISHVVMMATPKDLAAFALGFSLSEGIISSPQDIYAIEITPGCNGIEVNIELSSRRFAGLKERRRAMAGRTGCGVCGIEQLDDIFRPITPLPFTQAFNLEHLDTALAQLKQVQPVGQLTGCTHAAAWINPEGELLGGCEDVGRHVALDKLLGIRAKQPWQQGAVLVSSRASYEMVQKTAMCGAEILFAVSAATTLAVEVAERCNLTLVGFSKPGRATVYTHPQRIK.

Cys121 acts as the Cysteine persulfide intermediate in catalysis. 258-263 is a Mo-bis(molybdopterin guanine dinucleotide) binding site; it reads FSKPGR.

Belongs to the FdhD family.

It localises to the cytoplasm. Its function is as follows. Required for formate dehydrogenase (FDH) activity. Acts as a sulfur carrier protein that transfers sulfur from IscS to the molybdenum cofactor prior to its insertion into FDH. This chain is Sulfur carrier protein FdhD, found in Yersinia pseudotuberculosis serotype O:3 (strain YPIII).